The following is a 477-amino-acid chain: Methylenetetrahydrofolate--tRNA-(uracil-5-)-methyltransferase TrmFO (477 aa).

Position 14 to 19 (14 to 19 (GGGLAG)) interacts with FAD.

This sequence belongs to the MnmG family. TrmFO subfamily. It depends on FAD as a cofactor.

The protein localises to the cytoplasm. The enzyme catalyses uridine(54) in tRNA + (6R)-5,10-methylene-5,6,7,8-tetrahydrofolate + NADH + H(+) = 5-methyluridine(54) in tRNA + (6S)-5,6,7,8-tetrahydrofolate + NAD(+). It catalyses the reaction uridine(54) in tRNA + (6R)-5,10-methylene-5,6,7,8-tetrahydrofolate + NADPH + H(+) = 5-methyluridine(54) in tRNA + (6S)-5,6,7,8-tetrahydrofolate + NADP(+). Catalyzes the folate-dependent formation of 5-methyl-uridine at position 54 (M-5-U54) in all tRNAs. The chain is Methylenetetrahydrofolate--tRNA-(uracil-5-)-methyltransferase TrmFO from Rhizobium johnstonii (strain DSM 114642 / LMG 32736 / 3841) (Rhizobium leguminosarum bv. viciae).